The following is a 427-amino-acid chain: Adenylosuccinate synthetase (427 aa).

GTP is bound by residues 12 to 18 and 40 to 42; these read GDEGKGK and GHT. The active-site Proton acceptor is the Asp13. 2 residues coordinate Mg(2+): Asp13 and Gly40. IMP contacts are provided by residues 13-16, 38-41, Thr126, Arg140, Gln221, Thr236, and Arg299; these read DEGK and NAGH. The active-site Proton donor is His41. 295–301 provides a ligand contact to substrate; it reads STTNRPR. GTP contacts are provided by residues Arg301, 327–329, and 409–411; these read KLD and SLG.

Belongs to the adenylosuccinate synthetase family. As to quaternary structure, homodimer. It depends on Mg(2+) as a cofactor.

Its subcellular location is the cytoplasm. The catalysed reaction is IMP + L-aspartate + GTP = N(6)-(1,2-dicarboxyethyl)-AMP + GDP + phosphate + 2 H(+). The protein operates within purine metabolism; AMP biosynthesis via de novo pathway; AMP from IMP: step 1/2. Plays an important role in the de novo pathway of purine nucleotide biosynthesis. Catalyzes the first committed step in the biosynthesis of AMP from IMP. This is Adenylosuccinate synthetase from Borrelia turicatae (strain 91E135).